The chain runs to 443 residues: Glutamyl-tRNA reductase (443 aa).

Substrate is bound by residues 49–52 (TCNR), serine 109, 114–116 (EPQ), and glutamine 120. Residue cysteine 50 is the Nucleophile of the active site. 189 to 194 (GAGKMC) contributes to the NADP(+) binding site. Residues 421-443 (PDSQQTGGDSVEKDADSKQDLTS) form a disordered region. A compositionally biased stretch (basic and acidic residues) spans 430 to 443 (SVEKDADSKQDLTS).

This sequence belongs to the glutamyl-tRNA reductase family. Homodimer.

It catalyses the reaction (S)-4-amino-5-oxopentanoate + tRNA(Glu) + NADP(+) = L-glutamyl-tRNA(Glu) + NADPH + H(+). The protein operates within porphyrin-containing compound metabolism; protoporphyrin-IX biosynthesis; 5-aminolevulinate from L-glutamyl-tRNA(Glu): step 1/2. Its function is as follows. Catalyzes the NADPH-dependent reduction of glutamyl-tRNA(Glu) to glutamate 1-semialdehyde (GSA). The polypeptide is Glutamyl-tRNA reductase (Syntrophotalea carbinolica (strain DSM 2380 / NBRC 103641 / GraBd1) (Pelobacter carbinolicus)).